The sequence spans 140 residues: Transmembrane protein 107 (140 aa).

Transmembrane regions (helical) follow at residues 7–27 and 53–73; these read LVPS…TLFW and LVAA…GFLS. Asn79 carries an N-linked (GlcNAc...) asparagine glycan. Helical transmembrane passes span 83 to 103 and 113 to 133; these read SLLS…FIFE and IFAF…IAVF.

Part of the tectonic-like complex (also named B9 complex). Interacts with TMEM237, TMEM231, MKS1 and TMEM216.

It is found in the membrane. Its subcellular location is the cell projection. The protein localises to the cilium. Plays a role in cilia formation and embryonic patterning. Requires for normal Sonic hedgehog (Shh) signaling in the neural tube and acts in combination with GLI2 and GLI3 to pattern ventral and intermediate neuronal cell types. During ciliogenesis regulates the ciliary transition zone localization of some MKS complex proteins. The chain is Transmembrane protein 107 from Rattus norvegicus (Rat).